The following is a 118-amino-acid chain: MNFRALFAATVAALVGSTSATTCTTTQQTAAYVALVSILSDSSFNQCATDSGYSMLTATSLPTTDQYKLMCASTACNSMIAKIISLNAPDCELTVPTSGLVLNVYSYANGFSATCASL.

The N-terminal stretch at 1 to 20 (MNFRALFAATVAALVGSTSA) is a signal peptide. 3 disulfides stabilise this stretch: Cys23–Cys91, Cys47–Cys76, and Cys71–Cys115.

Belongs to the elicitin family.

It is found in the secreted. Its function is as follows. Induces local and distal defense responses (incompatible hypersensitive reaction) in plants from the solanaceae and cruciferae families. Elicits leaf necrosis and causes the accumulation of pathogenesis-related proteins. Might interact with the lipidic molecules of the plasma membrane. This chain is Acidic elicitin A1 (B14), found in Phytophthora cryptogea.